We begin with the raw amino-acid sequence, 130 residues long: Small ribosomal subunit protein uS9 (130 aa).

Belongs to the universal ribosomal protein uS9 family.

The protein is Small ribosomal subunit protein uS9 of Azotobacter vinelandii (strain DJ / ATCC BAA-1303).